The following is a 413-amino-acid chain: Protein FAM8A1 (413 aa).

Residues 1-10 (MAEGPEEARG) show a composition bias toward basic and acidic residues. The tract at residues 1-105 (MAEGPEEARG…PEAAAPRERP (105 aa)) is disordered. The span at 49 to 64 (APGRPTAPGLAAAAAA) shows a compositional bias: low complexity. Residues 65 to 78 (DKLEPPRELRKRGE) are compositionally biased toward basic and acidic residues. The segment at 107–139 (RLSAREYSRQVHEWLWQSYCGYLTWHSGLAAFP) is necessary and sufficient to interact with SYVN1. The interval 217 to 236 (PVTRVGSAAPSRSPSETGRQ) is disordered. Serine 229 is modified (phosphoserine). The RDD domain occupies 242-408 (VIPSLAHRFM…DIVAGTIVVK (167 aa)). Transmembrane regions (helical) follow at residues 257–277 (FFILFFIKATIVLSIMHLSGI), 304–324 (MMVVALIYRLLVCFYEIICIW), and 371–391 (ALIKNFSIASFFPAFITLLFF).

In terms of assembly, component of the HRD1 complex, which comprises at least SYNV1/HRD1, FAM8A1, HERPUD1/HERP, OS9, SEL1L and UBE2J1. This interaction stabilizes FAM8A1 protein, preventing its proteasomal degradation. FAM8A1 binding to SYNV1 may promote recruitment of HERPUD1 to the HRD1 complex. Ubiquitously expressed, with a higher level of expression in testis.

The protein resides in the membrane. Functionally, plays a role in the assembly of the HRD1 complex, a complex involved in the ubiquitin-proteasome-dependent process of ER-associated degradation (ERAD). The chain is Protein FAM8A1 (FAM8A1) from Homo sapiens (Human).